The sequence spans 391 residues: Oxytocin receptor (391 aa).

At M1–L38 the chain is on the extracellular side. N8, N15, and N26 each carry an N-linked (GlcNAc...) asparagine glycan. A helical membrane pass occupies residues A39–A63. Residues L64 to L74 lie on the Cytoplasmic side of the membrane. The chain crosses the membrane as a helical span at residues F75 to L97. Residues L98–R113 are Extracellular-facing. C112 and C187 are disulfide-bonded. Residues L114 to L135 form a helical membrane-spanning segment. The Cytoplasmic segment spans residues D136–R154. A helical membrane pass occupies residues L155–F175. Residues S176–T202 lie on the Extracellular side of the membrane. A helical membrane pass occupies residues W203–F225. The Cytoplasmic portion of the chain corresponds to K226–K277. A helical membrane pass occupies residues M278 to V296. At Q297–S311 the chain is on the extracellular side. Residues P312 to F334 traverse the membrane as a helical segment. The Cytoplasmic segment spans residues T335–L391. 2 positions are modified to phosphoserine: S368 and S370.

This sequence belongs to the G-protein coupled receptor 1 family. Vasopressin/oxytocin receptor subfamily.

It localises to the cell membrane. Receptor for oxytocin. The activity of this receptor is mediated by G proteins which activate a phosphatidylinositol-calcium second messenger system. This chain is Oxytocin receptor (OXTR), found in Bos taurus (Bovine).